The following is a 460-amino-acid chain: Argininosuccinate lyase (460 aa).

Belongs to the lyase 1 family. Argininosuccinate lyase subfamily.

Its subcellular location is the cytoplasm. It catalyses the reaction 2-(N(omega)-L-arginino)succinate = fumarate + L-arginine. It functions in the pathway amino-acid biosynthesis; L-arginine biosynthesis; L-arginine from L-ornithine and carbamoyl phosphate: step 3/3. The polypeptide is Argininosuccinate lyase (Campylobacter jejuni (strain RM1221)).